The following is a 564-amino-acid chain: Cytochrome P450 monooxygenase fsdH (564 aa).

A helical membrane pass occupies residues 18–38 (GSVSLAVLSTLAVVIAGWYIL). Residue Cys472 participates in heme binding.

This sequence belongs to the cytochrome P450 family. Heme is required as a cofactor.

It is found in the membrane. It functions in the pathway mycotoxin biosynthesis. Functionally, cytochrome P450 monooxygenase; part of the gene cluster that mediates the biosynthesis of fusaridione A, a bright yellow trans-fused decalin-containing tetramic acid with antimicrobial activity. The PKS module of fsdS catalyzes the formation of the polyketide unit which is then conjugated to L-tyrosine by the condensation domain of the fsdS NRPS module. Activity of the Dieckmann cyclase domain (RED) results in release of the intermediate fusaridione A. The unstable pyrrolidinedione ring of fusaridione A is opened through a reverse-Dieckmann reaction to afford its ring-opened form. This chain is Cytochrome P450 monooxygenase fsdH, found in Fusarium heterosporum.